Consider the following 438-residue polypeptide: MNFKKTENALSLTLKNFIKSESFGGIFLFLNAVLAMVVANSFVKESYFALWHTPFGFQIGDFFIGFSLHNWIDDVLMALFFLMIGLEIKRELLFGELSSFKKASFPVIAAIGGMIAPGLIYFFLNADTPSQHGFGIPMATDIAFALGVIMLLGKRVPTALKVFLITLAVADDLGAIMVIALFYTTNLKFAWLLGALGVVLVLALLNRLNTHSLIPYLLLGVLLWFCVHQSGIHATIAAVVLAFMIPVKIPKDSKNVELLELGKRYAETSSEVLLTKEQQEILHSIGEKANALQSPLEKLEHFLAPISGYFIMPLFAFANAGVSVDSNINLEVDKVLLGVILGLCLGKPLGIFLITFIGEKFKITSRPKGISWWHILGAGFLAGIGFTMSMFISNLAFTGEHKDAMEVAKIAILLGSLISGIIGALYLFLLDKKATLKK.

Transmembrane regions (helical) follow at residues 23–43 (FGGI…NSFV), 62–82 (FFIG…LFFL), 104–124 (SFPV…YFFL), 133–153 (GFGI…MLLG), 162–182 (VFLI…IALF), 185–205 (TNLK…LALL), 212–232 (SLIP…QSGI), 302–322 (FLAP…NAGV), 337–357 (LGVI…ITFI), 372–392 (WWHI…SMFI), and 410–430 (IAIL…LFLL).

It belongs to the NhaA Na(+)/H(+) (TC 2.A.33) antiporter family.

It localises to the cell inner membrane. The enzyme catalyses Na(+)(in) + 2 H(+)(out) = Na(+)(out) + 2 H(+)(in). Na(+)/H(+) antiporter that extrudes sodium in exchange for external protons. This Helicobacter acinonychis (strain Sheeba) protein is Na(+)/H(+) antiporter NhaA.